A 377-amino-acid chain; its full sequence is Prolargin (377 aa).

Positions Met-1–Gly-21 are cleaved as a signal peptide. A disordered region spans residues Gln-22–Pro-61. Pro residues-rich tracts occupy residues Arg-36–His-45 and Asp-52–Pro-61. LRR repeat units lie at residues Arg-90–Ile-109, Thr-110–Ile-133, Arg-134–Leu-157, Glu-158–Ile-178, Ser-179–Leu-202, Ser-203–Leu-228, Arg-229–Ile-249, Glu-250–Leu-273, Ser-274–Ile-298, Ser-299–Ile-318, Glu-319–Leu-357, and Lys-358–Ile-377. The N-linked (GlcNAc...) asparagine glycan is linked to Asn-119. Residues Asn-284, Asn-315, and Asn-322 are each glycosylated (N-linked (GlcNAc...) asparagine). A disulfide bridge connects residues Cys-327 and Cys-368.

The protein belongs to the small leucine-rich proteoglycan (SLRP) family. SLRP class II subfamily. As to quaternary structure, binds the basement membrane heparan sulfate proteoglycan perlecan and triple helical collagens type I and type II. In terms of processing, glycosylated; contains heparan sulfate.

The protein resides in the secreted. Its subcellular location is the extracellular space. The protein localises to the extracellular matrix. Functionally, may anchor basement membranes to the underlying connective tissue. This chain is Prolargin (Prelp), found in Rattus norvegicus (Rat).